The following is a 192-amino-acid chain: Ribosomal RNA large subunit methyltransferase E (192 aa).

S-adenosyl-L-methionine contacts are provided by Gly48, Phe50, Asp67, Asp85, and Asp107. Catalysis depends on Lys147, which acts as the Proton acceptor.

Belongs to the class I-like SAM-binding methyltransferase superfamily. RNA methyltransferase RlmE family.

Its subcellular location is the cytoplasm. It catalyses the reaction uridine(2552) in 23S rRNA + S-adenosyl-L-methionine = 2'-O-methyluridine(2552) in 23S rRNA + S-adenosyl-L-homocysteine + H(+). In terms of biological role, specifically methylates the uridine in position 2552 of 23S rRNA at the 2'-O position of the ribose in the fully assembled 50S ribosomal subunit. The sequence is that of Ribosomal RNA large subunit methyltransferase E from Borrelia garinii subsp. bavariensis (strain ATCC BAA-2496 / DSM 23469 / PBi) (Borreliella bavariensis).